Consider the following 214-residue polypeptide: Phosphatidylserine decarboxylase proenzyme (214 aa).

S182 serves as the catalytic Schiff-base intermediate with substrate; via pyruvic acid. S182 carries the post-translational modification Pyruvic acid (Ser); by autocatalysis.

The protein belongs to the phosphatidylserine decarboxylase family. PSD-A subfamily. In terms of assembly, heterodimer of a large membrane-associated beta subunit and a small pyruvoyl-containing alpha subunit. It depends on pyruvate as a cofactor. Is synthesized initially as an inactive proenzyme. Formation of the active enzyme involves a self-maturation process in which the active site pyruvoyl group is generated from an internal serine residue via an autocatalytic post-translational modification. Two non-identical subunits are generated from the proenzyme in this reaction, and the pyruvate is formed at the N-terminus of the alpha chain, which is derived from the carboxyl end of the proenzyme. The post-translation cleavage follows an unusual pathway, termed non-hydrolytic serinolysis, in which the side chain hydroxyl group of the serine supplies its oxygen atom to form the C-terminus of the beta chain, while the remainder of the serine residue undergoes an oxidative deamination to produce ammonia and the pyruvoyl prosthetic group on the alpha chain.

The protein resides in the cell membrane. It catalyses the reaction a 1,2-diacyl-sn-glycero-3-phospho-L-serine + H(+) = a 1,2-diacyl-sn-glycero-3-phosphoethanolamine + CO2. Its pathway is phospholipid metabolism; phosphatidylethanolamine biosynthesis; phosphatidylethanolamine from CDP-diacylglycerol: step 2/2. Catalyzes the formation of phosphatidylethanolamine (PtdEtn) from phosphatidylserine (PtdSer). The sequence is that of Phosphatidylserine decarboxylase proenzyme from Burkholderia vietnamiensis (strain G4 / LMG 22486) (Burkholderia cepacia (strain R1808)).